The following is a 266-amino-acid chain: GTP-binding protein Rhes (266 aa).

26–33 (GASRVGKS) is a binding site for GTP. An Effector region motif is present at residues 48 to 56 (YTPTIEDFH). Residues 73-77 (DTSGN) and 140-143 (NKND) contribute to the GTP site. The tract at residues 189-235 (MAKLPHEMSPALHHKISVQYGDAFHPRPFCMRRTKVAGAYGMVSPFA) is interaction with GNB1, GNB2 and GNB3. At Cys263 the chain carries Cysteine methyl ester. Cys263 is lipidated: S-farnesyl cysteine. The propeptide at 264–266 (SIQ) is removed in mature form.

The protein belongs to the small GTPase superfamily. RasD family. Monomer (Potential). Interacts with PIK3CA and UBE2I. Interacts with GNB1, GNB2 and GNB3. In terms of processing, farnesylated. Farnesylation is required for membrane targeting. Highly expressed in brain; prominently in the striatum and weakly in kidney, thyroid, lung, heart and testis. Not expressed in liver. Expressed in pancreatic cell lines and in a embryonic stem cell line.

The protein resides in the cell membrane. Functionally, GTPase signaling protein that binds to and hydrolyzes GTP. Regulates signaling pathways involving G-proteins-coupled receptor and heterotrimeric proteins such as GNB1, GNB2 and GNB3. May be involved in selected striatal competencies, mainly locomotor activity and motor coordination. In Mus musculus (Mouse), this protein is GTP-binding protein Rhes (Rasd2).